Here is a 363-residue protein sequence, read N- to C-terminus: Chorismate synthase (363 aa).

Arg-48 contributes to the NADP(+) binding site. Residues 125–127 (RSS), 238–239 (NA), Gly-278, 293–297 (KPTAS), and Arg-319 contribute to the FMN site.

This sequence belongs to the chorismate synthase family. Homotetramer. FMNH2 is required as a cofactor.

It carries out the reaction 5-O-(1-carboxyvinyl)-3-phosphoshikimate = chorismate + phosphate. It functions in the pathway metabolic intermediate biosynthesis; chorismate biosynthesis; chorismate from D-erythrose 4-phosphate and phosphoenolpyruvate: step 7/7. Its function is as follows. Catalyzes the anti-1,4-elimination of the C-3 phosphate and the C-6 proR hydrogen from 5-enolpyruvylshikimate-3-phosphate (EPSP) to yield chorismate, which is the branch point compound that serves as the starting substrate for the three terminal pathways of aromatic amino acid biosynthesis. This reaction introduces a second double bond into the aromatic ring system. The polypeptide is Chorismate synthase (Acinetobacter baylyi (strain ATCC 33305 / BD413 / ADP1)).